We begin with the raw amino-acid sequence, 120 residues long: Cytochrome c oxidase subunit 5 (120 aa).

A Blocked amino end (Ser) modification is found at Ser2. Positions 76, 84, 99, and 102 each coordinate Zn(2+).

It belongs to the cytochrome c oxidase subunit 5B family. Component of the cytochrome c oxidase (complex IV, CIV), a multisubunit enzyme composed of a catalytic core of 3 subunits and several supernumerary subunits. The complex exists as a monomer or a dimer and forms supercomplexes (SCs) in the inner mitochondrial membrane with ubiquinol-cytochrome c oxidoreductase (cytochrome b-c1 complex, complex III, CIII). Slime mold cytochrome c oxidase consists of at least seven different polypeptides species, subunits I, II, III, IV, V, VI, and VIIe/s in order of MW.

Its subcellular location is the mitochondrion inner membrane. It functions in the pathway energy metabolism; oxidative phosphorylation. Its function is as follows. Component of the cytochrome c oxidase, the last enzyme in the mitochondrial electron transport chain which drives oxidative phosphorylation. The respiratory chain contains 3 multisubunit complexes succinate dehydrogenase (complex II, CII), ubiquinol-cytochrome c oxidoreductase (cytochrome b-c1 complex, complex III, CIII) and cytochrome c oxidase (complex IV, CIV), that cooperate to transfer electrons derived from NADH and succinate to molecular oxygen, creating an electrochemical gradient over the inner membrane that drives transmembrane transport and the ATP synthase. Cytochrome c oxidase is the component of the respiratory chain that catalyzes the reduction of oxygen to water. Electrons originating from reduced cytochrome c in the intermembrane space (IMS) are transferred via the dinuclear copper A center (CU(A)) of subunit 2 and heme A of subunit 1 to the active site in subunit 1, a binuclear center (BNC) formed by heme A3 and copper B (CU(B)). The BNC reduces molecular oxygen to 2 water molecules using 4 electrons from cytochrome c in the IMS and 4 protons from the mitochondrial matrix. This chain is Cytochrome c oxidase subunit 5 (cxeA), found in Dictyostelium discoideum (Social amoeba).